The following is a 214-amino-acid chain: Cytochrome c biogenesis ATP-binding export protein CcmA (214 aa).

Positions 8-212 (LYAADLACLK…PPTVLDLSEV (205 aa)) constitute an ABC transporter domain. Position 40–47 (40–47 (GPNGFGKT)) interacts with ATP.

It belongs to the ABC transporter superfamily. CcmA exporter (TC 3.A.1.107) family. As to quaternary structure, the complex is composed of two ATP-binding proteins (CcmA) and two transmembrane proteins (CcmB).

It is found in the cell inner membrane. It catalyses the reaction heme b(in) + ATP + H2O = heme b(out) + ADP + phosphate + H(+). In terms of biological role, part of the ABC transporter complex CcmAB involved in the biogenesis of c-type cytochromes; once thought to export heme, this seems not to be the case, but its exact role is uncertain. Responsible for energy coupling to the transport system. The sequence is that of Cytochrome c biogenesis ATP-binding export protein CcmA from Aromatoleum aromaticum (strain DSM 19018 / LMG 30748 / EbN1) (Azoarcus sp. (strain EbN1)).